Consider the following 425-residue polypeptide: Glutamate-1-semialdehyde 2,1-aminomutase (425 aa).

Residue K265 is modified to N6-(pyridoxal phosphate)lysine.

This sequence belongs to the class-III pyridoxal-phosphate-dependent aminotransferase family. HemL subfamily. In terms of assembly, homodimer. Pyridoxal 5'-phosphate serves as cofactor.

It is found in the cytoplasm. It carries out the reaction (S)-4-amino-5-oxopentanoate = 5-aminolevulinate. It functions in the pathway porphyrin-containing compound metabolism; protoporphyrin-IX biosynthesis; 5-aminolevulinate from L-glutamyl-tRNA(Glu): step 2/2. The polypeptide is Glutamate-1-semialdehyde 2,1-aminomutase (Opitutus terrae (strain DSM 11246 / JCM 15787 / PB90-1)).